The chain runs to 497 residues: MDVMKYNDLRDFLTLLEQQGELKRITLPVDPHLEITEIADRTLRAGGPALLFENPKGYSMPVLCNLFGTPKRVAMGMGQEDVSALREVGKLLAFLKEPEPPKGFRDLFDKLPQFKQVLNMPTKRLRGAPCQQKIVSGDDVDLHRIPIMTCWPGDAAPLITWGLTVTRRPHKERQNLGIYRQQLIGKNKLIMRWLSHRGGALDYQEWCAAHPGERFPVSVALGADPATILGAVTPVPDTLSEYAFAGLLRGTKTEVVKCISNDLEVPASAEIVLEGYIEQGETAPEGPYGDHTGYYNEVDSFPVFTVTHITQREDAIYHSTYTGRPPDEPAVLGVALNEVFVPILQKQFPEIVDFYLPPEGCSYRLAVVTIKKQYAGHAKRVMMGVWSFLRQFMYTKFVIVCDDDVNARDWNDVIWAITTRMDPARDTVLVENTPIDYLDFASPVSGLGSKMGLDATNKWPGETQREWGRPIKKDPDVVAHIDAIWDELAIFNNGKSA.

Asn-175 provides a ligand contact to Mn(2+). Prenylated FMN-binding positions include 178–180 (IYR), 192–194 (RWL), and 197–198 (RG). Glu-241 lines the Mn(2+) pocket. The active-site Proton donor is the Asp-290.

The protein belongs to the UbiD family. As to quaternary structure, homohexamer. The cofactor is prenylated FMN. Mn(2+) is required as a cofactor.

Its subcellular location is the cell membrane. The catalysed reaction is a 4-hydroxy-3-(all-trans-polyprenyl)benzoate + H(+) = a 2-(all-trans-polyprenyl)phenol + CO2. The protein operates within cofactor biosynthesis; ubiquinone biosynthesis. Functionally, catalyzes the decarboxylation of 3-octaprenyl-4-hydroxy benzoate to 2-octaprenylphenol, an intermediate step in ubiquinone biosynthesis. The sequence is that of 3-octaprenyl-4-hydroxybenzoate carboxy-lyase from Shigella dysenteriae serotype 1 (strain Sd197).